The chain runs to 120 residues: Large ribosomal subunit protein uL18 (120 aa).

The protein belongs to the universal ribosomal protein uL18 family. In terms of assembly, part of the 50S ribosomal subunit; part of the 5S rRNA/L5/L18/L25 subcomplex. Contacts the 5S and 23S rRNAs.

In terms of biological role, this is one of the proteins that bind and probably mediate the attachment of the 5S RNA into the large ribosomal subunit, where it forms part of the central protuberance. This Beijerinckia indica subsp. indica (strain ATCC 9039 / DSM 1715 / NCIMB 8712) protein is Large ribosomal subunit protein uL18.